Here is a 146-residue protein sequence, read N- to C-terminus: D-aminoacyl-tRNA deacylase (146 aa).

Positions 138–139 (GP) match the Gly-cisPro motif, important for rejection of L-amino acids motif.

Belongs to the DTD family. In terms of assembly, homodimer.

The protein localises to the cytoplasm. It carries out the reaction glycyl-tRNA(Ala) + H2O = tRNA(Ala) + glycine + H(+). The catalysed reaction is a D-aminoacyl-tRNA + H2O = a tRNA + a D-alpha-amino acid + H(+). In terms of biological role, an aminoacyl-tRNA editing enzyme that deacylates mischarged D-aminoacyl-tRNAs. Also deacylates mischarged glycyl-tRNA(Ala), protecting cells against glycine mischarging by AlaRS. Acts via tRNA-based rather than protein-based catalysis; rejects L-amino acids rather than detecting D-amino acids in the active site. By recycling D-aminoacyl-tRNA to D-amino acids and free tRNA molecules, this enzyme counteracts the toxicity associated with the formation of D-aminoacyl-tRNA entities in vivo and helps enforce protein L-homochirality. The protein is D-aminoacyl-tRNA deacylase of Xanthomonas campestris pv. campestris (strain 8004).